A 433-amino-acid chain; its full sequence is Glutamate--tRNA ligase (433 aa).

Positions 10-20 match the 'HIGH' region motif; the sequence is PSPTGYLHIGG. Positions 211–215 match the 'KMSKS' region motif; that stretch reads KMSKR. Lys214 contributes to the ATP binding site.

This sequence belongs to the class-I aminoacyl-tRNA synthetase family. Glutamate--tRNA ligase type 1 subfamily. In terms of assembly, monomer.

It localises to the cytoplasm. It catalyses the reaction tRNA(Glu) + L-glutamate + ATP = L-glutamyl-tRNA(Glu) + AMP + diphosphate. Functionally, catalyzes the attachment of glutamate to tRNA(Glu) in a two-step reaction: glutamate is first activated by ATP to form Glu-AMP and then transferred to the acceptor end of tRNA(Glu). The polypeptide is Glutamate--tRNA ligase (Akkermansia muciniphila (strain ATCC BAA-835 / DSM 22959 / JCM 33894 / BCRC 81048 / CCUG 64013 / CIP 107961 / Muc)).